An 833-amino-acid chain; its full sequence is Leucine--tRNA ligase (833 aa).

Positions 41 to 52 (PYPSGAGLHVGH) match the 'HIGH' region motif. The 'KMSKS' region signature appears at 610 to 614 (KMSKS). Residue Lys-613 coordinates ATP.

The protein belongs to the class-I aminoacyl-tRNA synthetase family.

The protein resides in the cytoplasm. The enzyme catalyses tRNA(Leu) + L-leucine + ATP = L-leucyl-tRNA(Leu) + AMP + diphosphate. This chain is Leucine--tRNA ligase, found in Streptococcus pneumoniae (strain ATCC 700669 / Spain 23F-1).